Consider the following 107-residue polypeptide: UPF0060 membrane protein A1S_1909 (107 aa).

4 helical membrane-spanning segments follow: residues 2-22, 28-48, 56-76, and 85-105; these read FGLF…PYLI, SAWL…LLTL, IYAA…RFVD, and ILGG…PQGL.

The protein belongs to the UPF0060 family.

It localises to the cell inner membrane. In Acinetobacter baumannii (strain ATCC 17978 / DSM 105126 / CIP 53.77 / LMG 1025 / NCDC KC755 / 5377), this protein is UPF0060 membrane protein A1S_1909.